The chain runs to 392 residues: Phosphoglycerate kinase (392 aa).

Residues 21–23 (DFN), Arg36, 59–62 (HLGR), Arg113, and Arg146 each bind substrate. Residues Lys197, Glu319, and 345 to 348 (GGDT) each bind ATP.

Belongs to the phosphoglycerate kinase family. As to quaternary structure, monomer.

It is found in the cytoplasm. The enzyme catalyses (2R)-3-phosphoglycerate + ATP = (2R)-3-phospho-glyceroyl phosphate + ADP. The protein operates within carbohydrate degradation; glycolysis; pyruvate from D-glyceraldehyde 3-phosphate: step 2/5. The sequence is that of Phosphoglycerate kinase from Francisella tularensis subsp. holarctica (strain FTNF002-00 / FTA).